A 167-amino-acid polypeptide reads, in one-letter code: Large ribosomal subunit protein uL10 (167 aa).

It belongs to the universal ribosomal protein uL10 family. Part of the ribosomal stalk of the 50S ribosomal subunit. The N-terminus interacts with L11 and the large rRNA to form the base of the stalk. The C-terminus forms an elongated spine to which L12 dimers bind in a sequential fashion forming a multimeric L10(L12)X complex.

In terms of biological role, forms part of the ribosomal stalk, playing a central role in the interaction of the ribosome with GTP-bound translation factors. This is Large ribosomal subunit protein uL10 from Lactiplantibacillus plantarum (strain ATCC BAA-793 / NCIMB 8826 / WCFS1) (Lactobacillus plantarum).